Reading from the N-terminus, the 304-residue chain is Non-specific ribonucleoside hydrolase RihC (304 aa).

Residue His-233 is part of the active site.

Belongs to the IUNH family. RihC subfamily.

In terms of biological role, hydrolyzes both purine and pyrimidine ribonucleosides with a broad-substrate specificity. In Escherichia coli (strain SE11), this protein is Non-specific ribonucleoside hydrolase RihC.